The sequence spans 286 residues: Formamidopyrimidine-DNA glycosylase (286 aa).

The active-site Schiff-base intermediate with DNA is Pro2. Glu3 (proton donor) is an active-site residue. The active-site Proton donor; for beta-elimination activity is Lys61. 3 residues coordinate DNA: His103, Arg122, and Arg164. The FPG-type zinc-finger motif lies at 250-284; it reads NAYAQTGEPCGRCGTLIIRESFMNRGSHYCPNCQK. The Proton donor; for delta-elimination activity role is filled by Arg274.

The protein belongs to the FPG family. Monomer. The cofactor is Zn(2+).

The catalysed reaction is Hydrolysis of DNA containing ring-opened 7-methylguanine residues, releasing 2,6-diamino-4-hydroxy-5-(N-methyl)formamidopyrimidine.. It carries out the reaction 2'-deoxyribonucleotide-(2'-deoxyribose 5'-phosphate)-2'-deoxyribonucleotide-DNA = a 3'-end 2'-deoxyribonucleotide-(2,3-dehydro-2,3-deoxyribose 5'-phosphate)-DNA + a 5'-end 5'-phospho-2'-deoxyribonucleoside-DNA + H(+). Its function is as follows. Involved in base excision repair of DNA damaged by oxidation or by mutagenic agents. Acts as a DNA glycosylase that recognizes and removes damaged bases. Has a preference for oxidized purines, such as 7,8-dihydro-8-oxoguanine (8-oxoG). Has AP (apurinic/apyrimidinic) lyase activity and introduces nicks in the DNA strand. Cleaves the DNA backbone by beta-delta elimination to generate a single-strand break at the site of the removed base with both 3'- and 5'-phosphates. This Corynebacterium glutamicum (strain ATCC 13032 / DSM 20300 / JCM 1318 / BCRC 11384 / CCUG 27702 / LMG 3730 / NBRC 12168 / NCIMB 10025 / NRRL B-2784 / 534) protein is Formamidopyrimidine-DNA glycosylase.